Here is a 711-residue protein sequence, read N- to C-terminus: Polyribonucleotide nucleotidyltransferase (711 aa).

The Mg(2+) site is built by aspartate 486 and aspartate 492. Residues 553-612 form the KH domain; the sequence is PRIHTIKINPDKIKDVIGKGGSVIRALTEETGTTIEIEDDGTVKIAATDGEKAKHAIRRI. The 69-residue stretch at 622–690 folds into the S1 motif domain; the sequence is GRVYNGKVTR…RQGRIRLSIK (69 aa). Positions 689–711 are disordered; it reads IKEATEQSQPAAAPEAPAAEQGE. The segment covering 694 to 711 has biased composition (low complexity); it reads EQSQPAAAPEAPAAEQGE.

It belongs to the polyribonucleotide nucleotidyltransferase family. Component of the RNA degradosome, which is a multiprotein complex involved in RNA processing and mRNA degradation. Mg(2+) is required as a cofactor.

The protein localises to the cytoplasm. It carries out the reaction RNA(n+1) + phosphate = RNA(n) + a ribonucleoside 5'-diphosphate. Functionally, involved in mRNA degradation. Catalyzes the phosphorolysis of single-stranded polyribonucleotides processively in the 3'- to 5'-direction. This Escherichia coli O6:K15:H31 (strain 536 / UPEC) protein is Polyribonucleotide nucleotidyltransferase.